A 440-amino-acid polypeptide reads, in one-letter code: Proline--tRNA ligase (440 aa).

Belongs to the class-II aminoacyl-tRNA synthetase family. ProS type 2 subfamily. In terms of assembly, homodimer.

It localises to the cytoplasm. It carries out the reaction tRNA(Pro) + L-proline + ATP = L-prolyl-tRNA(Pro) + AMP + diphosphate. Its function is as follows. Catalyzes the attachment of proline to tRNA(Pro) in a two-step reaction: proline is first activated by ATP to form Pro-AMP and then transferred to the acceptor end of tRNA(Pro). This Xanthobacter autotrophicus (strain ATCC BAA-1158 / Py2) protein is Proline--tRNA ligase.